Consider the following 148-residue polypeptide: Putative adenylate kinase (148 aa).

ATP-binding residues include Gly-9, Gly-11, Lys-12, Ser-13, and Thr-14. Residues 28–44 (EGNALAVKYGCLSGDEV) form an NMP region. The tract at residues 91–101 (DRGYSPEKIDE) is LID. ATP is bound at residue Arg-92.

Belongs to the adenylate kinase family. AK6 subfamily. Interacts with uS11. Not a structural component of 40S pre-ribosomes, but transiently interacts with them by binding to uS11.

The enzyme catalyses AMP + ATP = 2 ADP. The catalysed reaction is ATP + H2O = ADP + phosphate + H(+). In terms of biological role, broad-specificity nucleoside monophosphate (NMP) kinase that catalyzes the reversible transfer of the terminal phosphate group between nucleoside triphosphates and monophosphates. Also has ATPase activity. Involved in the late maturation steps of the 30S ribosomal particles, specifically 16S rRNA maturation. While NMP activity is not required for ribosome maturation, ATPase activity is. Associates transiently with small ribosomal subunit protein uS11. ATP hydrolysis breaks the interaction with uS11. May temporarily remove uS11 from the ribosome to enable a conformational change of the ribosomal RNA that is needed for the final maturation step of the small ribosomal subunit. The protein is Putative adenylate kinase of Thermoplasma acidophilum (strain ATCC 25905 / DSM 1728 / JCM 9062 / NBRC 15155 / AMRC-C165).